Here is a 110-residue protein sequence, read N- to C-terminus: NADH dehydrogenase [ubiquinone] iron-sulfur protein 6, mitochondrial (110 aa).

Residues 1 to 22 (MASNLLKALIRSQILPSSRRNF) constitute a mitochondrion transit peptide.

The protein belongs to the complex I NDUFS6 subunit family. In terms of assembly, complex I is composed of at least 49 different subunits. This is a component of the iron-sulfur (IP) fragment of the enzyme.

It localises to the mitochondrion inner membrane. Its function is as follows. Accessory subunit of the mitochondrial membrane respiratory chain NADH dehydrogenase (Complex I), that is believed not to be involved in catalysis. Complex I functions in the transfer of electrons from NADH to the respiratory chain. The immediate electron acceptor for the enzyme is believed to be ubiquinone. In Arabidopsis thaliana (Mouse-ear cress), this protein is NADH dehydrogenase [ubiquinone] iron-sulfur protein 6, mitochondrial.